Reading from the N-terminus, the 403-residue chain is Dual-specificity RNA methyltransferase RlmN (403 aa).

Catalysis depends on Glu-126, which acts as the Proton acceptor. Positions 132–375 constitute a Radical SAM core domain; sequence ETDRGTLCVS…VRTPRGRDIL (244 aa). Cys-139 and Cys-378 are joined by a disulfide. The [4Fe-4S] cluster site is built by Cys-146, Cys-150, and Cys-153. Residues 204-205, Ser-236, 258-260, and Asn-335 contribute to the S-adenosyl-L-methionine site; these read GE and SLH. The S-methylcysteine intermediate role is filled by Cys-378.

This sequence belongs to the radical SAM superfamily. RlmN family. [4Fe-4S] cluster is required as a cofactor.

It localises to the cytoplasm. The enzyme catalyses adenosine(2503) in 23S rRNA + 2 reduced [2Fe-2S]-[ferredoxin] + 2 S-adenosyl-L-methionine = 2-methyladenosine(2503) in 23S rRNA + 5'-deoxyadenosine + L-methionine + 2 oxidized [2Fe-2S]-[ferredoxin] + S-adenosyl-L-homocysteine. It catalyses the reaction adenosine(37) in tRNA + 2 reduced [2Fe-2S]-[ferredoxin] + 2 S-adenosyl-L-methionine = 2-methyladenosine(37) in tRNA + 5'-deoxyadenosine + L-methionine + 2 oxidized [2Fe-2S]-[ferredoxin] + S-adenosyl-L-homocysteine. In terms of biological role, specifically methylates position 2 of adenine 2503 in 23S rRNA and position 2 of adenine 37 in tRNAs. m2A2503 modification seems to play a crucial role in the proofreading step occurring at the peptidyl transferase center and thus would serve to optimize ribosomal fidelity. The polypeptide is Dual-specificity RNA methyltransferase RlmN (Bradyrhizobium sp. (strain ORS 278)).